Consider the following 335-residue polypeptide: uncharacterized protein (335 aa).

This is an uncharacterized protein from Acanthamoeba polyphaga mimivirus (APMV).